The chain runs to 787 residues: Integrin beta-6 (787 aa).

An N-terminal signal peptide occupies residues 1–21 (MGIELVCLFLLLLGRNDHVQG). The 50-residue stretch at 22 to 71 (GCAWGGAESCSDCLLTGPHCAWCSQENFTHLSGAGERCDTPANLLAKGCQ) folds into the PSI domain. Topologically, residues 22–708 (GCAWGGAESC…KDCPKPPNIP (687 aa)) are extracellular. Disulfide bonds link Cys-23/Cys-41, Cys-31/Cys-454, Cys-34/Cys-59, Cys-44/Cys-70, Cys-197/Cys-204, Cys-252/Cys-293, Cys-394/Cys-406, Cys-426/Cys-452, Cys-456/Cys-476, Cys-467/Cys-479, Cys-481/Cys-490, Cys-492/Cys-519, Cys-502/Cys-517, Cys-511/Cys-522, Cys-524/Cys-537, Cys-539/Cys-560, Cys-544/Cys-558, Cys-552/Cys-563, and Cys-565/Cys-574. Asn-48 and Asn-97 each carry an N-linked (GlcNAc...) asparagine glycan. A VWFA domain is found at 131 to 371 (YPVDLYYLMD…QLIISAYEEL (241 aa)). Mg(2+) contacts are provided by Asp-140, Ser-142, and Ser-144. 4 residues coordinate Ca(2+): Ser-144, Asp-147, Asp-148, and Glu-179. Ca(2+) is bound by residues Asn-235, Asp-237, Pro-239, and Glu-240. Glu-240 provides a ligand contact to Mg(2+). N-linked (GlcNAc...) asparagine glycosylation occurs at Asn-260. Ca(2+) is bound by residues Asp-271 and Lys-355. An N-linked (GlcNAc...) asparagine glycan is attached at Asn-387. The N-linked (GlcNAc...) asparagine glycan is linked to Asn-418. 4 consecutive I-EGF domains span residues 456-491 (CQREIETNSSKCHNGNGSFQCGVCTCNPGHMGPHCE), 492-538 (CGED…PYCQ), 539-575 (CDNFSCLRHKGLLCGDNGDCDCGECVCRDGWTGEYCN), and 576-615 (CTTNRDSCTSEDGVLCSGRGDCVCGKCVCRNPGASGPTCE). N-linked (GlcNAc...) asparagine glycosylation is found at Asn-463 and Asn-471. The N-linked (GlcNAc...) asparagine glycan is linked to Asn-541. Asn-575 carries an N-linked (GlcNAc...) asparagine glycan. Intrachain disulfides connect Cys-576/Cys-599, Cys-583/Cys-597, Cys-591/Cys-602, Cys-604/Cys-614, Cys-617/Cys-620, Cys-624/Cys-669, Cys-630/Cys-649, Cys-633/Cys-645, and Cys-677/Cys-701. A helical membrane pass occupies residues 709 to 729 (MIMLGVSLAILLIGVVLLCIW). Residues 730 to 757 (KLLVSFHDRKEVAKFEAERSKAKWQTGT) form an interaction with HAX1 region. At 730-787 (KLLVSFHDRKEVAKFEAERSKAKWQTGTNPLYRGSTSTFKNVTYKHREKHKAGLSSDG) the chain is on the cytoplasmic side.

The protein belongs to the integrin beta chain family. In terms of assembly, heterodimer of an alpha and a beta subunit. Interacts with FLNB. Interacts with HAX1. ITGAV:ITGB6 interacts with FBN1. ITGAV:ITGB6 interacts with TGFB1.

It localises to the cell membrane. The protein resides in the cell junction. Its subcellular location is the focal adhesion. Functionally, integrin alpha-V:beta-6 (ITGAV:ITGB6) is a receptor for fibronectin and cytotactin. It recognizes the sequence R-G-D in its ligands. ITGAV:ITGB6 acts as a receptor for fibrillin-1 (FBN1) and mediates R-G-D-dependent cell adhesion to FBN1. Integrin alpha-V:beta-6 (ITGAV:ITGB6) mediates R-G-D-dependent release of transforming growth factor beta-1 (TGF-beta-1) from regulatory Latency-associated peptide (LAP), thereby playing a key role in TGF-beta-1 activation. This is Integrin beta-6 (Itgb6) from Mus musculus (Mouse).